The primary structure comprises 325 residues: Biotin synthase (325 aa).

The Radical SAM core domain maps to 51–280 (FMGRKADLCT…NVYIRYAGGR (230 aa)). The [4Fe-4S] cluster site is built by C69, C73, and C76. Residues S113, C145, C205, and R275 each coordinate [2Fe-2S] cluster.

It belongs to the radical SAM superfamily. Biotin synthase family. Homodimer. It depends on [4Fe-4S] cluster as a cofactor. [2Fe-2S] cluster is required as a cofactor.

It catalyses the reaction (4R,5S)-dethiobiotin + (sulfur carrier)-SH + 2 reduced [2Fe-2S]-[ferredoxin] + 2 S-adenosyl-L-methionine = (sulfur carrier)-H + biotin + 2 5'-deoxyadenosine + 2 L-methionine + 2 oxidized [2Fe-2S]-[ferredoxin]. It functions in the pathway cofactor biosynthesis; biotin biosynthesis; biotin from 7,8-diaminononanoate: step 2/2. In terms of biological role, catalyzes the conversion of dethiobiotin (DTB) to biotin by the insertion of a sulfur atom into dethiobiotin via a radical-based mechanism. The chain is Biotin synthase from Clostridioides difficile (strain 630) (Peptoclostridium difficile).